The chain runs to 244 residues: DNA repair protein RecO (244 aa).

It belongs to the RecO family.

Its function is as follows. Involved in DNA repair and RecF pathway recombination. This Caldicellulosiruptor saccharolyticus (strain ATCC 43494 / DSM 8903 / Tp8T 6331) protein is DNA repair protein RecO.